The following is a 112-amino-acid chain: UPF0375 protein R05A10.4 (112 aa).

The first 19 residues, Met-1–Ala-19, serve as a signal peptide directing secretion. Asn-59 carries an N-linked (GlcNAc...) asparagine glycan.

This sequence belongs to the UPF0375 family.

The protein localises to the secreted. The chain is UPF0375 protein R05A10.4 from Caenorhabditis elegans.